The following is a 332-amino-acid chain: Fructose-1,6-bisphosphatase class 1 (332 aa).

Residues E89, D110, L112, and D113 each coordinate Mg(2+). Residues D113–S116, N206, Y239, Y257–Y259, and K269 contribute to the substrate site. E275 serves as a coordination point for Mg(2+).

It belongs to the FBPase class 1 family. Homotetramer. Mg(2+) serves as cofactor.

It is found in the cytoplasm. It catalyses the reaction beta-D-fructose 1,6-bisphosphate + H2O = beta-D-fructose 6-phosphate + phosphate. It participates in carbohydrate biosynthesis; gluconeogenesis. The protein is Fructose-1,6-bisphosphatase class 1 of Citrobacter koseri (strain ATCC BAA-895 / CDC 4225-83 / SGSC4696).